We begin with the raw amino-acid sequence, 701 residues long: Elongation factor G (701 aa).

In terms of domain architecture, tr-type G spans 8–290 (SLYRNIGISA…AVIDYLPAPT (283 aa)). Residues 17 to 24 (AHIDAGKT), 88 to 92 (DTPGH), and 142 to 145 (NKMD) each bind GTP.

Belongs to the TRAFAC class translation factor GTPase superfamily. Classic translation factor GTPase family. EF-G/EF-2 subfamily.

Its subcellular location is the cytoplasm. Its function is as follows. Catalyzes the GTP-dependent ribosomal translocation step during translation elongation. During this step, the ribosome changes from the pre-translocational (PRE) to the post-translocational (POST) state as the newly formed A-site-bound peptidyl-tRNA and P-site-bound deacylated tRNA move to the P and E sites, respectively. Catalyzes the coordinated movement of the two tRNA molecules, the mRNA and conformational changes in the ribosome. This Haemophilus ducreyi (strain 35000HP / ATCC 700724) protein is Elongation factor G.